Here is a 475-residue protein sequence, read N- to C-terminus: Argininosuccinate lyase 1 (475 aa).

This sequence belongs to the lyase 1 family. Argininosuccinate lyase subfamily.

The protein localises to the cytoplasm. The enzyme catalyses 2-(N(omega)-L-arginino)succinate = fumarate + L-arginine. Its pathway is amino-acid biosynthesis; L-arginine biosynthesis; L-arginine from L-ornithine and carbamoyl phosphate: step 3/3. The sequence is that of Argininosuccinate lyase 1 from Pseudomonas fluorescens (strain Pf0-1).